The sequence spans 468 residues: Inositol polyphosphate 5-phosphatase K (468 aa).

The segment at 34-337 (VHVVTWNVAS…SDHKPVTGTF (304 aa)) is catalytic. The segment at 318 to 448 (NYVSHMAYSI…HSVVGISQPF (131 aa)) is required for interaction with GPR78 and PAK1. A required for ruffle localization region spans residues 340 to 468 (ELNPLMSVPL…DTLYEPEPQI (129 aa)).

The protein belongs to the inositol 1,4,5-trisphosphate 5-phosphatase type II family. As to quaternary structure, interacts with GPR78; necessary for INPP5K localization at the endoplasmic reticulum. Interacts with PAK1; competes with GPR78. Expressed in the skeletal muscle and the eye.

It is found in the endoplasmic reticulum. Its subcellular location is the cytoplasm. It carries out the reaction 1D-myo-inositol 1,4,5-trisphosphate + H2O = 1D-myo-inositol 1,4-bisphosphate + phosphate. The enzyme catalyses 1,2-dioctanoyl-sn-glycero-3-phospho-(1D-myo-inositol-3,4,5-trisphosphate) + H2O = 1,2-dioctanoyl-sn-glycero-3-phospho-(1D-myo-inositol-3,4-bisphosphate) + phosphate. It catalyses the reaction 1D-myo-inositol 1,3,4,5-tetrakisphosphate + H2O = 1D-myo-inositol 1,3,4-trisphosphate + phosphate. The catalysed reaction is a 1,2-diacyl-sn-glycero-3-phospho-(1D-myo-inositol-4,5-bisphosphate) + H2O = a 1,2-diacyl-sn-glycero-3-phospho-(1D-myo-inositol 4-phosphate) + phosphate. It carries out the reaction a 1,2-diacyl-sn-glycero-3-phospho-(1D-myo-inositol-3,4,5-trisphosphate) + H2O = a 1,2-diacyl-sn-glycero-3-phospho-(1D-myo-inositol-3,4-bisphosphate) + phosphate. In terms of biological role, inositol 5-phosphatase which acts on inositol 1,4,5-trisphosphate, inositol 1,3,4,5-tetrakisphosphate, phosphatidylinositol 4,5-bisphosphate and phosphatidylinositol 3,4,5-trisphosphate. Has 6-fold higher affinity for phosphatidylinositol 4,5-bisphosphate than for inositol 1,4,5-trisphosphate. Negatively regulates assembly of the actin cytoskeleton. Controls insulin-dependent glucose uptake among inositol 3,4,5-trisphosphate phosphatases; therefore, is the specific regulator for insulin signaling in skeletal muscle. This is Inositol polyphosphate 5-phosphatase K from Mus musculus (Mouse).